Reading from the N-terminus, the 379-residue chain is Zinc finger protein 883 (379 aa).

13 C2H2-type zinc fingers span residues Tyr13–His35, Tyr41–His63, Tyr69–His91, Tyr97–His119, Tyr125–His147, Tyr153–His175, Tyr181–His203, Tyr209–His231, Tyr237–His259, Tyr265–His287, Tyr293–His315, Tyr321–His343, and Tyr349–His371.

This sequence belongs to the krueppel C2H2-type zinc-finger protein family.

It localises to the nucleus. May be involved in transcriptional regulation. The sequence is that of Zinc finger protein 883 (ZNF883) from Homo sapiens (Human).